Here is a 212-residue protein sequence, read N- to C-terminus: Small ribosomal subunit protein uS3 (212 aa).

One can recognise a KH type-2 domain in the interval 39 to 108; the sequence is IKNYIKERYK…EITISVVEVR (70 aa).

It belongs to the universal ribosomal protein uS3 family. As to quaternary structure, part of the 30S ribosomal subunit. Forms a tight complex with proteins S10 and S14.

Functionally, binds the lower part of the 30S subunit head. Binds mRNA in the 70S ribosome, positioning it for translation. The protein is Small ribosomal subunit protein uS3 of Aquifex aeolicus (strain VF5).